The primary structure comprises 477 residues: Stromelysin-1 (477 aa).

A signal peptide spans 1-17 (MKNLPILLLLCVAACSA). A propeptide spans 18–99 (YPLDRSARDE…SRCGVPDVGH (82 aa)) (activation peptide). The short motif at 90 to 97 (SRCGVPDV) is the Cysteine switch element. Cys92 contacts Zn(2+). N-linked (GlcNAc...) asparagine glycosylation occurs at Asn120. Residues Asp124 and Asp158 each contribute to the Ca(2+) site. 2 residues coordinate Zn(2+): His168 and Asp170. Residues Asp175, Gly176, Gly178, and Val180 each contribute to the Ca(2+) site. His183 lines the Zn(2+) pocket. Residues Gly190, Asn192, and Asp194 each contribute to the Ca(2+) site. His196 lines the Zn(2+) pocket. Ca(2+) is bound by residues Asp198, Asp199, and Glu201. His218 serves as a coordination point for Zn(2+). Glu219 is an active-site residue. The Zn(2+) site is built by His222 and His228. A disordered region spans residues 260 to 285 (QSLYGPPPASPDSPVEPSEPEPPAPG). Hemopexin repeat units lie at residues 287–336 (LAMC…WPSL), 337–383 (PSGI…GFPP), 385–433 (VRKI…FPGI), and 434–477 (DSKL…WFNC). Cys290 and Cys477 are joined by a disulfide. A Ca(2+)-binding site is contributed by Asp297. Ca(2+) contacts are provided by Asp389 and Asp438.

It belongs to the peptidase M10A family. Ca(2+) serves as cofactor. Zn(2+) is required as a cofactor.

Its subcellular location is the secreted. The protein resides in the extracellular space. It is found in the extracellular matrix. It carries out the reaction Preferential cleavage where P1', P2' and P3' are hydrophobic residues.. In terms of biological role, metalloproteinase with a rather broad substrate specificity that can degrade fibronectin, laminin, gelatins of type I, III, IV, and V; collagens III, IV, X, and IX, and cartilage proteoglycans. Activates different molecules including growth factors, plasminogen or other matrix metalloproteinases such as MMP9. Once released into the extracellular matrix (ECM), the inactive pro-enzyme is activated by the plasmin cascade signaling pathway. Also acts intracellularly. For example, in dopaminergic neurons, gets activated by the serine protease HTRA2 upon stress and plays a pivotal role in DA neuronal degeneration by mediating microglial activation and alpha-synuclein/SNCA cleavage. In addition, plays a role in immune response and possesses antiviral activity against various viruses. Mechanistically, translocates from the cytoplasm into the cell nucleus upon virus infection to influence NF-kappa-B activities. In Equus caballus (Horse), this protein is Stromelysin-1 (MMP3).